The chain runs to 551 residues: Putative ABC transporter ATP-binding protein BT9727_3105 (551 aa).

2 ABC transporter domains span residues 5–243 and 293–525; these read AEIN…FRPF and LSAE…SINR. Residues 39-46 and 327-334 contribute to the ATP site; these read GGSGSGKT and GKNGTGKS.

The protein belongs to the ABC transporter superfamily.

The protein localises to the cell membrane. Probably part of an ABC transporter complex. Responsible for energy coupling to the transport system. In Bacillus thuringiensis subsp. konkukian (strain 97-27), this protein is Putative ABC transporter ATP-binding protein BT9727_3105.